The following is a 375-amino-acid chain: Probable pectin lyase C (375 aa).

A signal peptide spans 1–20 (MKITSTIPAVLLGLAPLSAA). 2 cysteine pairs are disulfide-bonded: C83/C100 and C92/C220. Residue R250 is part of the active site. An intrachain disulfide couples C317 to C325.

Belongs to the polysaccharide lyase 1 family.

Its subcellular location is the secreted. It carries out the reaction Eliminative cleavage of (1-&gt;4)-alpha-D-galacturonan methyl ester to give oligosaccharides with 4-deoxy-6-O-methyl-alpha-D-galact-4-enuronosyl groups at their non-reducing ends.. In terms of biological role, pectinolytic enzymes consist of four classes of enzymes: pectin lyase, polygalacturonase, pectin methylesterase and rhamnogalacturonase. Among pectinolytic enzymes, pectin lyase is the most important in depolymerization of pectin, since it cleaves internal glycosidic bonds of highly methylated pectins. The chain is Probable pectin lyase C (pelC) from Aspergillus oryzae (strain ATCC 42149 / RIB 40) (Yellow koji mold).